A 262-amino-acid polypeptide reads, in one-letter code: Acyl-[acyl-carrier-protein]--UDP-N-acetylglucosamine O-acyltransferase (262 aa).

Belongs to the transferase hexapeptide repeat family. LpxA subfamily. In terms of assembly, homotrimer.

It localises to the cytoplasm. It catalyses the reaction a (3R)-hydroxyacyl-[ACP] + UDP-N-acetyl-alpha-D-glucosamine = a UDP-3-O-[(3R)-3-hydroxyacyl]-N-acetyl-alpha-D-glucosamine + holo-[ACP]. Its pathway is glycolipid biosynthesis; lipid IV(A) biosynthesis; lipid IV(A) from (3R)-3-hydroxytetradecanoyl-[acyl-carrier-protein] and UDP-N-acetyl-alpha-D-glucosamine: step 1/6. Involved in the biosynthesis of lipid A, a phosphorylated glycolipid that anchors the lipopolysaccharide to the outer membrane of the cell. The protein is Acyl-[acyl-carrier-protein]--UDP-N-acetylglucosamine O-acyltransferase of Histophilus somni (strain 129Pt) (Haemophilus somnus).